The sequence spans 155 residues: Ribonuclease H (155 aa).

An RNase H type-1 domain is found at 4 to 145 (TEPTVYAYTD…ADRLANRGID (142 aa)). Residues Asp-13, Glu-51, Asp-73, and Asp-137 each coordinate Mg(2+).

It belongs to the RNase H family. As to quaternary structure, monomer. It depends on Mg(2+) as a cofactor.

It is found in the cytoplasm. The enzyme catalyses Endonucleolytic cleavage to 5'-phosphomonoester.. Endonuclease that specifically degrades the RNA of RNA-DNA hybrids. This is Ribonuclease H from Methylococcus capsulatus (strain ATCC 33009 / NCIMB 11132 / Bath).